A 476-amino-acid chain; its full sequence is Protein transport protein Sec61 subunit alpha (476 aa).

The Cytoplasmic portion of the chain corresponds to 2-33 (GIKFLEVIKPFCAVLPEIQKPERKIQFREKVL). Residues 34–53 (WTAITLFIFLVCCQIPLFGI) traverse the membrane as a helical segment. The Lumenal portion of the chain corresponds to 54 to 76 (MSSDSADPFYWMRVILASNRGTL). A helical transmembrane segment spans residues 77–96 (MELGISPIVTSDLIMQLLAG). The Cytoplasmic portion of the chain corresponds to 97 to 117 (AKIIEVGDSPKDRALFNGAQK). The helical transmembrane segment at 118-138 (LFGMIITIGQAIVYVMTGMYG) threads the bilayer. Residues 139-144 (DPSEMG) lie on the Lumenal side of the membrane. A helical transmembrane segment spans residues 145–165 (AGICLVIIIQLFVAGLIVLLL). Topologically, residues 166-172 (DELLQKG) are cytoplasmic. Residues 173–193 (YGLGSGISLLIATNICETIVW) form a helical membrane-spanning segment. At 194–240 (KAFSPTTVNTGRGTEFEGAIIALFHLLATRTDKVRALREAFYRQNLP) the chain is on the lumenal side. The helical transmembrane segment at 241-261 (NLMNLIATVFVFAVVIYFQGF) threads the bilayer. Residues 262-288 (RVDLPIKSARYRGQYNTYPIKLFYTSN) lie on the Cytoplasmic side of the membrane. Residues 289 to 309 (IPIILQSALVSNLYVISQMLS) form a helical membrane-spanning segment. The Lumenal portion of the chain corresponds to 310–354 (TRFSGNFIVNLLGTWSDTSTGGPARAYPVGGLCYFLSPPESFGSV). Residues 355–375 (LDDPVHAAIYIVFMLGSCAFF) traverse the membrane as a helical segment. Topologically, residues 376-420 (SKTWIEVSGSSAKDVAKQLKEQQMVMRGHRETSMVHELNRYIPTA) are cytoplasmic. A helical membrane pass occupies residues 421–441 (AAFGGLCIGGLSVMADFLGAI). At 442–445 (GSGT) the chain is on the lumenal side. Residues 446–462 (GILLAVTIIYQYFEIFV) traverse the membrane as a helical segment. Topologically, residues 463–476 (KEQSEMGSMGGLFF) are cytoplasmic.

This sequence belongs to the SecY/SEC61-alpha family. The SEC61 channel-forming translocon complex consists of channel-forming core components SEC61A1, SEC61B and SEC61G and different auxiliary components such as SEC62 and SEC63. The SEC61 channel associates with the multi-pass translocon (MPT) complex.

It localises to the endoplasmic reticulum membrane. Its function is as follows. Component of SEC61 channel-forming translocon complex that mediates transport of signal peptide-containing precursor polypeptides across the endoplasmic reticulum (ER). Forms a ribosome receptor and a gated pore in the ER membrane, both functions required for cotranslational translocation of nascent polypeptides. May cooperate with auxiliary protein SEC62, SEC63 and HSPA5/BiP to enable post-translational transport of small presecretory proteins. The SEC61 channel is also involved in ER membrane insertion of transmembrane proteins: it mediates membrane insertion of the first few transmembrane segments of proteins, while insertion of subsequent transmembrane regions of multi-pass membrane proteins is mediated by the multi-pass translocon (MPT) complex. This is Protein transport protein Sec61 subunit alpha (sec61a) from Boreogadus saida (Polar cod).